A 164-amino-acid polypeptide reads, in one-letter code: Monothiol glutaredoxin-S10 (164 aa).

Positions Glu-60 to Val-161 constitute a Glutaredoxin domain. Position 80 (Cys-80) interacts with [2Fe-2S] cluster.

Belongs to the glutaredoxin family. CPYC subfamily.

Its subcellular location is the cytoplasm. In terms of biological role, may only reduce GSH-thiol disulfides, but not protein disulfides. This is Monothiol glutaredoxin-S10 (GRXS10) from Oryza sativa subsp. japonica (Rice).